Consider the following 205-residue polypeptide: MSKRESSKYKIDRRMGENIWGRPKSPVNRREYGPGQHGQRRKSKLSDFGVQLRAKQKLKGYYGDIREKQFRAIFAEASRRKGDTPENLVGLLESRLDAIVYRAKFVPTVFAARQFVNHGHVKVNGVRVNIGSYRCKPGDVIEVKESSKQLVTVLEAVQLAERDVPDYIEADHNKMVATFVRVPALADVPYPVIMEPHLVVEFYSR.

A compositionally biased stretch (basic and acidic residues) spans 1–16 (MSKRESSKYKIDRRMG). Positions 1–46 (MSKRESSKYKIDRRMGENIWGRPKSPVNRREYGPGQHGQRRKSKLS) are disordered. Residues 94-157 (SRLDAIVYRA…KQLVTVLEAV (64 aa)) enclose the S4 RNA-binding domain.

Belongs to the universal ribosomal protein uS4 family. Part of the 30S ribosomal subunit. Contacts protein S5. The interaction surface between S4 and S5 is involved in control of translational fidelity.

Functionally, one of the primary rRNA binding proteins, it binds directly to 16S rRNA where it nucleates assembly of the body of the 30S subunit. In terms of biological role, with S5 and S12 plays an important role in translational accuracy. The protein is Small ribosomal subunit protein uS4 of Sinorhizobium medicae (strain WSM419) (Ensifer medicae).